The following is a 409-amino-acid chain: Serine protease inhibitor 2 (409 aa).

Residues 1-21 (MNKLNFVILCLAALLVFDATA) form the signal peptide. Residues asparagine 294 and asparagine 324 are each glycosylated (N-linked (GlcNAc...) asparagine). The short motif at 356-360 (LGSEA) is the Hinge region; required for binding to peptidase element.

The protein belongs to the serpin family. In terms of assembly, forms a covalent heterodimer with protease CLIPB9; the interaction inhibits CLIPB9 protease activity. Forms a covalent heterodimer with protease CLIPB10; the interaction inhibits CLIPB10 catalytic activity. Interacts with CLIPB4 in the hemolymph of immune-challenged female mosquitoes; the interaction results in CLIPB4 inhibition. Post-translationally, protease CLIPB9 binds to SRPN2 via the hinge region resulting in the cleavage of the reactive bond. This leads to a conformational change in SRPN2 which traps CLIPB9 and distorts its active site, resulting in CLIPB9 inactivation.

The protein localises to the secreted. In terms of biological role, serine protease inhibitor that functions in the melanization-mediated immune response. By preventing the activation of phenoloxidases through the inhibiting of serine proteases CLIPB9, CLIPB10 and CLIPB4, negatively regulates melanization in the hemolymph. By preventing melanization, has a detrimental role during P.berghei parasite mediated-infection and invasion of the mosquito midgut. The polypeptide is Serine protease inhibitor 2 (Anopheles gambiae (African malaria mosquito)).